The following is a 1448-amino-acid chain: Probable serine/threonine-protein kinase irlB (1448 aa).

Over residues 412 to 423 (DDDDYDDYDDDD) the composition is skewed to acidic residues. The tract at residues 412–446 (DDDDYDDYDDDDDHHSGCNNNNNNNNDGDHNEDEN) is disordered. The span at 428–437 (GCNNNNNNNN) shows a compositional bias: low complexity. Coiled coils occupy residues 666-817 (AESE…EIQN), 887-921 (EIQL…SNMK), and 974-1016 (ENNK…QDED). Residues 975-1008 (NNKKQNLINDNNNNNNNNNNNNNNNNNNNNNNKL) form a disordered region. A compositionally biased stretch (low complexity) spans 978-1008 (KQNLINDNNNNNNNNNNNNNNNNNNNNNNKL). The Protein kinase domain occupies 1027 to 1293 (RNESNILGRG…IQNVLNHPLF (267 aa)). Residues 1033 to 1041 (LGRGSNGTL) and Lys1056 contribute to the ATP site. The Proton acceptor role is filled by Asp1151. The region spanning 1296 to 1448 (LEKKIQFIDA…TIDYLFNFYN (153 aa)) is the KEN domain.

Belongs to the protein kinase superfamily. Ser/Thr protein kinase family.

It catalyses the reaction L-seryl-[protein] + ATP = O-phospho-L-seryl-[protein] + ADP + H(+). It carries out the reaction L-threonyl-[protein] + ATP = O-phospho-L-threonyl-[protein] + ADP + H(+). This is Probable serine/threonine-protein kinase irlB (irlB-1) from Dictyostelium discoideum (Social amoeba).